An 859-amino-acid chain; its full sequence is Autoinducer 2 sensor kinase/phosphatase LuxQ (859 aa).

A run of 2 helical transmembrane segments spans residues 15 to 35 (ATLITKIIILVLAPIILGIFI) and 280 to 300 (IQHILAMLASIIGMIMIALMS). In terms of domain architecture, Histidine kinase spans 489–711 (KMSHEIRTPI…TFVITLPVKD (223 aa)). Position 492 is a phosphohistidine; by autocatalysis (histidine 492). The Response regulatory domain maps to 736-851 (KVLLVEDNHT…ALHEAFVDFK (116 aa)). Residue aspartate 785 is modified to 4-aspartylphosphate.

Binds the complex formed by AI-2 and LuxP.

The protein resides in the cell inner membrane. The enzyme catalyses ATP + protein L-histidine = ADP + protein N-phospho-L-histidine.. In terms of biological role, at low cell density, in absence of AI-2 (autoinducer 2), LuxQ has a kinase activity and autophosphorylates on a histidine residue. The phosphoryl group is then transferred to an aspartate residue in the response regulator domain. The phosphoryl group is transferred to LuxU, and ultimately to LuxO. At high cell density, in the presence of AI-2, the kinase activity is inactivated, and the response regulator domain has a phosphatase activity. The polypeptide is Autoinducer 2 sensor kinase/phosphatase LuxQ (luxQ) (Vibrio harveyi (Beneckea harveyi)).